The chain runs to 194 residues: A-type ATP synthase subunit E (194 aa).

Positions 35-56 (DAEADADQIREEREAEVERTIE) are disordered. Residues 41-56 (DQIREEREAEVERTIE) are compositionally biased toward basic and acidic residues.

It belongs to the V-ATPase E subunit family. As to quaternary structure, has multiple subunits with at least A(3), B(3), C, D, E, F, H, I and proteolipid K(x).

The protein resides in the cell membrane. Its function is as follows. Component of the A-type ATP synthase that produces ATP from ADP in the presence of a proton gradient across the membrane. The sequence is that of A-type ATP synthase subunit E from Haloarcula marismortui (strain ATCC 43049 / DSM 3752 / JCM 8966 / VKM B-1809) (Halobacterium marismortui).